Consider the following 254-residue polypeptide: N-acetylglucosamine-induced protein 1 (254 aa).

It is found in the cytoplasm. Its function is as follows. N-acetylglucosamine-induced protein which plays a role in the N-acetylglucosamine metabolic pathway. This is N-acetylglucosamine-induced protein 1 from Candida albicans (strain SC5314 / ATCC MYA-2876) (Yeast).